A 277-amino-acid polypeptide reads, in one-letter code: uncharacterized protein (277 aa).

The disordered stretch occupies residues 1-20 (MVTTSPPPTLTNSVQPHPTT).

This is an uncharacterized protein from Acidianus convivator (ATV).